Here is a 207-residue protein sequence, read N- to C-terminus: HTH-type transcriptional regulator BetI 2 (207 aa).

The 61-residue stretch at 8–68 folds into the HTH tetR-type domain; sequence PIRRQQLIKA…ATMRQILTDL (61 aa). The segment at residues 31–50 is a DNA-binding region (H-T-H motif); the sequence is TVMRIARHAGVSAGIISHYF.

It functions in the pathway amine and polyamine biosynthesis; betaine biosynthesis via choline pathway [regulation]. Repressor involved in the biosynthesis of the osmoprotectant glycine betaine. It represses transcription of the choline transporter BetT and the genes of BetAB involved in the synthesis of glycine betaine. The sequence is that of HTH-type transcriptional regulator BetI 2 from Chromohalobacter salexigens (strain ATCC BAA-138 / DSM 3043 / CIP 106854 / NCIMB 13768 / 1H11).